Reading from the N-terminus, the 285-residue chain is Undecaprenyl-diphosphatase (285 aa).

Transmembrane regions (helical) follow at residues 40–60 (DELLINAASNAGTLLAMLLYF), 92–112 (LCILVATPFALAGAVIYENFI), 122–142 (SVYAVAASTIVFGALLWWADA), 159–179 (FLIGASQLVAVIIPGTSRSGI), 197–217 (FSMLIGAPILAAVSLYGLLGL), 233–253 (LIVAALAFVSGYASIGLLMAL), and 259–279 (FLPFVLYRFALGIALLATSPI).

It belongs to the UppP family.

Its subcellular location is the cell inner membrane. The catalysed reaction is di-trans,octa-cis-undecaprenyl diphosphate + H2O = di-trans,octa-cis-undecaprenyl phosphate + phosphate + H(+). Catalyzes the dephosphorylation of undecaprenyl diphosphate (UPP). Confers resistance to bacitracin. The polypeptide is Undecaprenyl-diphosphatase (Hyphomonas neptunium (strain ATCC 15444)).